The sequence spans 280 residues: Alpha-aminoadipate--LysW ligase LysX (280 aa).

ATP-binding positions include Lys-89, Lys-129, 133–139, 169–180, Arg-194, and Asn-202; these read GSWGRLL and QEYVEKPGRDIR. Residues 93-276 form the ATP-grasp domain; it reads SVALAKAGLP…IPGEILKYAW (184 aa). Residues Asp-237, Glu-249, and Asn-251 each coordinate Mg(2+). Residues 258 to 259 carry the N-[TS] motif that is essential for LysX substrate specificity motif; that stretch reads NS.

Belongs to the RimK family. LysX subfamily. As to quaternary structure, homodimer. Mg(2+) serves as cofactor.

The catalysed reaction is [amino-group carrier protein]-C-terminal-L-glutamate + L-2-aminoadipate + ATP = [amino-group carrier protein]-C-terminal-N-(1,4-dicarboxybutan-1-yl)-L-glutamine + ADP + phosphate + H(+). Its pathway is amino-acid biosynthesis; L-lysine biosynthesis via AAA pathway; L-lysine from L-alpha-aminoadipate (Thermus route): step 1/5. Functionally, catalyzes the ATP-dependent formation of a covalent bond between the amino group of alpha-aminoadipate (AAA) and the gamma-carboxyl group of the C-terminal glutamate residue in LysW. The polypeptide is Alpha-aminoadipate--LysW ligase LysX (lysX) (Thermus thermophilus (strain ATCC 27634 / DSM 579 / HB8)).